A 425-amino-acid chain; its full sequence is Threonylcarbamoyladenosine tRNA methylthiotransferase (425 aa).

The Radical SAM core domain maps to 60–295; that stretch reads RKNELIEVLS…RSYTRYTDER (236 aa). [4Fe-4S] cluster-binding residues include C74, C78, and C81. Positions 293 to 355 constitute a TRAM domain; it reads DERIGELHRV…KFSMISKPAS (63 aa). A helical transmembrane segment spans residues 362-382; the sequence is PLSLMHLFPLAVFCLVLITLY.

Belongs to the methylthiotransferase family. CDKAL1 subfamily. Requires [4Fe-4S] cluster as cofactor.

It is found in the membrane. The catalysed reaction is N(6)-L-threonylcarbamoyladenosine(37) in tRNA + (sulfur carrier)-SH + AH2 + 2 S-adenosyl-L-methionine = 2-methylsulfanyl-N(6)-L-threonylcarbamoyladenosine(37) in tRNA + (sulfur carrier)-H + 5'-deoxyadenosine + L-methionine + A + S-adenosyl-L-homocysteine + 2 H(+). Catalyzes the methylthiolation of N6-threonylcarbamoyladenosine (t(6)A), leading to the formation of 2-methylthio-N6-threonylcarbamoyladenosine (ms(2)t(6)A) at position 37 in tRNAs that read codons beginning with adenine. The chain is Threonylcarbamoyladenosine tRNA methylthiotransferase from Caenorhabditis elegans.